The following is a 143-amino-acid chain: Endoribonuclease YbeY (143 aa).

3 residues coordinate Zn(2+): H109, H113, and H119.

The protein belongs to the endoribonuclease YbeY family. Zn(2+) serves as cofactor.

It localises to the cytoplasm. Single strand-specific metallo-endoribonuclease involved in late-stage 70S ribosome quality control and in maturation of the 3' terminus of the 16S rRNA. This Neorickettsia sennetsu (strain ATCC VR-367 / Miyayama) (Ehrlichia sennetsu) protein is Endoribonuclease YbeY.